The following is a 133-amino-acid chain: C-C motif chemokine 21b (133 aa).

A signal peptide spans 1 to 23 (MAQMMTLSLLSLVLALCIPWTQG). Disulfide bonds link cysteine 31–cysteine 57, cysteine 32–cysteine 75, and cysteine 103–cysteine 122. Residues 87 to 133 (MRRLDQPPAPGKQSPGCRKNRGTSKSGKKGKGSKGCKRTEQTQPSRG) form a disordered region. Residues 98 to 133 (KQSPGCRKNRGTSKSGKKGKGSKGCKRTEQTQPSRG) form a C-terminal basic extension region. The span at 104–122 (RKNRGTSKSGKKGKGSKGC) shows a compositional bias: basic residues.

It belongs to the intercrine beta (chemokine CC) family. As to quaternary structure, binds to CCR7 and to CXCR3. Interacts with PDPN; relocalizes PDPN to the basolateral membrane. Interacts with GPR174. As to expression, expressed strongly in lung, spleen, thymus, peripheral and mesentric lymph nodes. Also expressed in the testis, kidney, liver, and heart.

Its subcellular location is the secreted. Functionally, inhibits hemopoiesis and stimulates chemotaxis. Chemotactic in vitro for thymocytes and activated T-cells, but not for B-cells, macrophages, or neutrophils. Potent mesangial cell chemoattractant. Shows preferential activity towards naive T-cells. May play a role in mediating homing of lymphocytes to secondary lymphoid organs. The chain is C-C motif chemokine 21b (Ccl21b) from Mus musculus (Mouse).